An 879-amino-acid chain; its full sequence is Alanine--tRNA ligase (879 aa).

4 residues coordinate Zn(2+): His565, His569, Cys674, and His678.

This sequence belongs to the class-II aminoacyl-tRNA synthetase family. The cofactor is Zn(2+).

Its subcellular location is the cytoplasm. It carries out the reaction tRNA(Ala) + L-alanine + ATP = L-alanyl-tRNA(Ala) + AMP + diphosphate. Functionally, catalyzes the attachment of alanine to tRNA(Ala) in a two-step reaction: alanine is first activated by ATP to form Ala-AMP and then transferred to the acceptor end of tRNA(Ala). Also edits incorrectly charged Ser-tRNA(Ala) and Gly-tRNA(Ala) via its editing domain. This is Alanine--tRNA ligase from Gluconobacter oxydans (strain 621H) (Gluconobacter suboxydans).